We begin with the raw amino-acid sequence, 285 residues long: RNA polymerase sigma factor RpoH (285 aa).

The tract at residues 53-122 (LILSHLRFVV…IHEYVLRNWR (70 aa)) is sigma-70 factor domain-2. The Interaction with polymerase core subunit RpoC signature appears at 77–80 (DLIQ). The segment at 229-281 (AMEGLDERSQDIIRARWLDEDNKSTLQELADRYGVSAERVRQLEKNAMKKLRA) is sigma-70 factor domain-4. The H-T-H motif DNA-binding region spans 254 to 273 (LQELADRYGVSAERVRQLEK).

It belongs to the sigma-70 factor family. RpoH subfamily. Interacts with the RNA polymerase core enzyme.

It is found in the cytoplasm. Sigma factors are initiation factors that promote the attachment of RNA polymerase to specific initiation sites and are then released. This sigma factor is involved in regulation of expression of heat shock genes. The protein is RNA polymerase sigma factor RpoH of Enterobacter cloacae.